Consider the following 581-residue polypeptide: Potassium-transporting ATPase potassium-binding subunit (581 aa).

The next 12 membrane-spanning stretches (helical) occupy residues 2–22, 74–94, 135–155, 177–197, 255–275, 284–304, 332–352, 357–377, 381–401, 421–441, 501–521, and 550–570; these read LQGW…TPFF, AVIA…PLNP, GLGY…IAFI, ILLP…VPET, LVQL…YGVF, LIYL…AIGE, WAQS…AVIA, LMPN…VFGG, GTAY…LMVG, FLIL…ALAF, LSAC…LLLL, and AGVI…LGPI.

It belongs to the KdpA family. The system is composed of three essential subunits: KdpA, KdpB and KdpC.

It localises to the cell inner membrane. Functionally, part of the high-affinity ATP-driven potassium transport (or Kdp) system, which catalyzes the hydrolysis of ATP coupled with the electrogenic transport of potassium into the cytoplasm. This subunit binds the periplasmic potassium ions and delivers the ions to the membrane domain of KdpB through an intramembrane tunnel. The protein is Potassium-transporting ATPase potassium-binding subunit of Microcystis aeruginosa (strain NIES-843 / IAM M-2473).